The sequence spans 288 residues: Small ribosomal subunit protein uS3 (288 aa).

Residues 38-106 (IRRMMSKGLE…QVQLNIIEVK (69 aa)) enclose the KH type-2 domain. Residues 209 to 288 (PGRETPAEAP…TQPAETQQEG (80 aa)) are disordered. The segment covering 219–232 (SRPRRERGDRSERP) has biased composition (basic and acidic residues). Low complexity predominate over residues 249–264 (AGRAAATTIAQAAETP). Residues 277 to 288 (AATQPAETQQEG) show a composition bias toward polar residues.

This sequence belongs to the universal ribosomal protein uS3 family. As to quaternary structure, part of the 30S ribosomal subunit. Forms a tight complex with proteins S10 and S14.

Binds the lower part of the 30S subunit head. Binds mRNA in the 70S ribosome, positioning it for translation. The protein is Small ribosomal subunit protein uS3 of Salinispora arenicola (strain CNS-205).